A 587-amino-acid chain; its full sequence is Aspartate--tRNA ligase (587 aa).

E174 provides a ligand contact to L-aspartate. Residues 198–201 form an aspartate region; sequence QITK. R220 contributes to the L-aspartate binding site. ATP-binding positions include 220 to 222 and Q229; that span reads RDE. H443 is an L-aspartate binding site. Residue E477 coordinates ATP. R484 lines the L-aspartate pocket. 529-532 contacts ATP; that stretch reads GLDR.

Belongs to the class-II aminoacyl-tRNA synthetase family. Type 1 subfamily. Homodimer.

The protein localises to the cytoplasm. It carries out the reaction tRNA(Asp) + L-aspartate + ATP = L-aspartyl-tRNA(Asp) + AMP + diphosphate. Functionally, catalyzes the attachment of L-aspartate to tRNA(Asp) in a two-step reaction: L-aspartate is first activated by ATP to form Asp-AMP and then transferred to the acceptor end of tRNA(Asp). The polypeptide is Aspartate--tRNA ligase (Streptococcus pneumoniae serotype 2 (strain D39 / NCTC 7466)).